We begin with the raw amino-acid sequence, 664 residues long: Methionine--tRNA ligase (664 aa).

Positions 13–23 (PYTNGPCHLGH) match the 'HIGH' region motif. Zn(2+) is bound by residues Cys-144, Cys-147, Cys-156, and Cys-160. Residues 327 to 331 (KFSKS) carry the 'KMSKS' region motif. Lys-330 provides a ligand contact to ATP. The region spanning 566–664 (EFAKVEMKTG…TPVPSGTKIR (99 aa)) is the tRNA-binding domain.

The protein belongs to the class-I aminoacyl-tRNA synthetase family. MetG type 1 subfamily. Homodimer. Zn(2+) serves as cofactor.

Its subcellular location is the cytoplasm. It catalyses the reaction tRNA(Met) + L-methionine + ATP = L-methionyl-tRNA(Met) + AMP + diphosphate. Is required not only for elongation of protein synthesis but also for the initiation of all mRNA translation through initiator tRNA(fMet) aminoacylation. This Methanospirillum hungatei JF-1 (strain ATCC 27890 / DSM 864 / NBRC 100397 / JF-1) protein is Methionine--tRNA ligase.